The chain runs to 622 residues: Matrilin-4 (622 aa).

The signal sequence occupies residues 1–18 (MRGLLCWPVLLLLLQPWE). Residues 34–213 (DLVFVIDSSR…EFGLQFQSRL (180 aa)) enclose the VWFA 1 domain. The N-linked (GlcNAc...) asparagine glycan is linked to Asn-69. The region spanning 215-255 (GKDQCAEGGHGCQHQCVNAWAMFHCTCNPGYKLAADNKSCL) is the EGF-like 1; incomplete domain. 12 disulfides stabilise this stretch: Cys-219–Cys-230, Cys-226–Cys-239, Cys-241–Cys-254, Cys-260–Cys-271, Cys-267–Cys-280, Cys-282–Cys-295, Cys-301–Cys-312, Cys-308–Cys-321, Cys-323–Cys-336, Cys-342–Cys-353, Cys-349–Cys-362, and Cys-364–Cys-377. Asn-251 is a glycosylation site (N-linked (GlcNAc...) asparagine). EGF-like domains follow at residues 256–292 (AIDLCAEGTHGCEHHCVNSPGSYFCHCQVGFVLQQDQ), 297–337 (AIDY…RSCQ), and 342–377 (CNGVDHGCEFQCVSEGLSYRCLCPEGRQLQADGKSC). Asn-305 is a glycosylation site (N-linked (GlcNAc...) asparagine). Residues 386-561 (DLVLLVDGSK…GTMTHLLENL (176 aa)) form the VWFA 2 domain. Residues 591 to 622 (GRTLGALESLTLNLAQLTARLEDLENQLANQK) adopt a coiled-coil conformation.

As to quaternary structure, interacts with COMP. Embryonic kidney, lung and placenta.

It is found in the secreted. Major component of the extracellular matrix of cartilage. In Homo sapiens (Human), this protein is Matrilin-4 (MATN4).